A 56-amino-acid polypeptide reads, in one-letter code: Bowman-Birk type proteinase inhibitor I-2B (56 aa).

Intrachain disulfides connect cysteine 10–cysteine 25, cysteine 15–cysteine 23, cysteine 32–cysteine 39, and cysteine 36–cysteine 51.

The protein belongs to the Bowman-Birk serine protease inhibitor family.

This Triticum aestivum (Wheat) protein is Bowman-Birk type proteinase inhibitor I-2B.